The chain runs to 182 residues: Protein GrpE (182 aa).

The tract at residues 1–37 (MSDSSKERKKKFTGMVNKQKSEDQQNNSKQADDLDEL) is disordered.

The protein belongs to the GrpE family. In terms of assembly, homodimer.

It localises to the cytoplasm. Participates actively in the response to hyperosmotic and heat shock by preventing the aggregation of stress-denatured proteins, in association with DnaK and GrpE. It is the nucleotide exchange factor for DnaK and may function as a thermosensor. Unfolded proteins bind initially to DnaJ; upon interaction with the DnaJ-bound protein, DnaK hydrolyzes its bound ATP, resulting in the formation of a stable complex. GrpE releases ADP from DnaK; ATP binding to DnaK triggers the release of the substrate protein, thus completing the reaction cycle. Several rounds of ATP-dependent interactions between DnaJ, DnaK and GrpE are required for fully efficient folding. In Wolbachia sp. subsp. Brugia malayi (strain TRS), this protein is Protein GrpE.